The primary structure comprises 268 residues: MTDKVHLGHRARKRFGQNFLFDDMIIGKIVSAIDPKPEDNLVEIGPGLGAITEPVAELSGHLTVVELDKDLAQRLIEHPFLGPKLTVNQGDAMTFDFASLVRDDKKLKVFGNLPYNISTPLLFHLFEFADNIEHMHFMLQKEVVKRMVAGPGSKTFGRLSVMTQYYCNAMPVIEVPPECFKPAPKVDSAVIRLIPKKPEQRTAKSVKILNNVCLEAFNQRRKTLRNSLSNLLTADELTSIGIDVTLRAERLSLQQFIDIANWIYDNKQ.

S-adenosyl-L-methionine contacts are provided by N18, L20, G45, E66, D91, and N112.

Belongs to the class I-like SAM-binding methyltransferase superfamily. rRNA adenine N(6)-methyltransferase family. RsmA subfamily.

It is found in the cytoplasm. It catalyses the reaction adenosine(1518)/adenosine(1519) in 16S rRNA + 4 S-adenosyl-L-methionine = N(6)-dimethyladenosine(1518)/N(6)-dimethyladenosine(1519) in 16S rRNA + 4 S-adenosyl-L-homocysteine + 4 H(+). Functionally, specifically dimethylates two adjacent adenosines (A1518 and A1519) in the loop of a conserved hairpin near the 3'-end of 16S rRNA in the 30S particle. May play a critical role in biogenesis of 30S subunits. The polypeptide is Ribosomal RNA small subunit methyltransferase A (Pseudoalteromonas translucida (strain TAC 125)).